The sequence spans 212 residues: Peptide methionine sulfoxide reductase MsrA (212 aa).

Residue Cys-52 is part of the active site.

This sequence belongs to the MsrA Met sulfoxide reductase family.

The catalysed reaction is L-methionyl-[protein] + [thioredoxin]-disulfide + H2O = L-methionyl-(S)-S-oxide-[protein] + [thioredoxin]-dithiol. It carries out the reaction [thioredoxin]-disulfide + L-methionine + H2O = L-methionine (S)-S-oxide + [thioredoxin]-dithiol. In terms of biological role, has an important function as a repair enzyme for proteins that have been inactivated by oxidation. Catalyzes the reversible oxidation-reduction of methionine sulfoxide in proteins to methionine. The chain is Peptide methionine sulfoxide reductase MsrA from Shigella boydii serotype 4 (strain Sb227).